The sequence spans 197 residues: Recombination protein RecR (197 aa).

The C4-type zinc finger occupies 54–69; the sequence is CQQCNNYTEQTLCTLC. The Toprim domain occupies 77–172; it reads TLLCVVESPA…NISQLAHGIP (96 aa).

It belongs to the RecR family.

Functionally, may play a role in DNA repair. It seems to be involved in an RecBC-independent recombinational process of DNA repair. It may act with RecF and RecO. In Legionella pneumophila (strain Paris), this protein is Recombination protein RecR.